A 176-amino-acid chain; its full sequence is Transcription factor E (176 aa).

One can recognise an HTH TFE/IIEalpha-type domain in the interval 5–89; sequence IDQLMKDMAR…YWKANVDQIN (85 aa).

The protein belongs to the TFE family. As to quaternary structure, monomer. Interaction with RNA polymerase subunits RpoF and RpoE is necessary for Tfe stimulatory transcription activity. Able to interact with Tbp and RNA polymerase in the absence of DNA promoter. Interacts both with the preinitiation and elongation complexes.

Functionally, transcription factor that plays a role in the activation of archaeal genes transcribed by RNA polymerase. Facilitates transcription initiation by enhancing TATA-box recognition by TATA-box-binding protein (Tbp), and transcription factor B (Tfb) and RNA polymerase recruitment. Not absolutely required for transcription in vitro, but particularly important in cases where Tbp or Tfb function is not optimal. It dynamically alters the nucleic acid-binding properties of RNA polymerases by stabilizing the initiation complex and destabilizing elongation complexes. Seems to translocate with the RNA polymerase following initiation and acts by binding to the non template strand of the transcription bubble in elongation complexes. The protein is Transcription factor E of Metallosphaera sedula (strain ATCC 51363 / DSM 5348 / JCM 9185 / NBRC 15509 / TH2).